Reading from the N-terminus, the 216-residue chain is Thiamine-phosphate synthase (216 aa).

4-amino-2-methyl-5-(diphosphooxymethyl)pyrimidine contacts are provided by residues 39 to 43 and asparagine 71; that span reads QLRRK. 2 residues coordinate Mg(2+): aspartate 72 and aspartate 91. 4-amino-2-methyl-5-(diphosphooxymethyl)pyrimidine is bound at residue serine 109. 136–138 is a 2-[(2R,5Z)-2-carboxy-4-methylthiazol-5(2H)-ylidene]ethyl phosphate binding site; it reads SPT. Lysine 139 serves as a coordination point for 4-amino-2-methyl-5-(diphosphooxymethyl)pyrimidine. 2-[(2R,5Z)-2-carboxy-4-methylthiazol-5(2H)-ylidene]ethyl phosphate contacts are provided by residues glycine 172 and 192-193; that span reads IT.

It belongs to the thiamine-phosphate synthase family. Mg(2+) serves as cofactor.

The enzyme catalyses 2-[(2R,5Z)-2-carboxy-4-methylthiazol-5(2H)-ylidene]ethyl phosphate + 4-amino-2-methyl-5-(diphosphooxymethyl)pyrimidine + 2 H(+) = thiamine phosphate + CO2 + diphosphate. It catalyses the reaction 2-(2-carboxy-4-methylthiazol-5-yl)ethyl phosphate + 4-amino-2-methyl-5-(diphosphooxymethyl)pyrimidine + 2 H(+) = thiamine phosphate + CO2 + diphosphate. The catalysed reaction is 4-methyl-5-(2-phosphooxyethyl)-thiazole + 4-amino-2-methyl-5-(diphosphooxymethyl)pyrimidine + H(+) = thiamine phosphate + diphosphate. It functions in the pathway cofactor biosynthesis; thiamine diphosphate biosynthesis; thiamine phosphate from 4-amino-2-methyl-5-diphosphomethylpyrimidine and 4-methyl-5-(2-phosphoethyl)-thiazole: step 1/1. Its function is as follows. Condenses 4-methyl-5-(beta-hydroxyethyl)thiazole monophosphate (THZ-P) and 2-methyl-4-amino-5-hydroxymethyl pyrimidine pyrophosphate (HMP-PP) to form thiamine monophosphate (TMP). The sequence is that of Thiamine-phosphate synthase from Bordetella avium (strain 197N).